A 177-amino-acid polypeptide reads, in one-letter code: Thymidine kinase (177 aa).

11–18 (GPMFSGKS) provides a ligand contact to ATP. Catalysis depends on Glu83, which acts as the Proton acceptor. Phe113 serves as a coordination point for substrate. Zn(2+) is bound by residues Cys138 and Cys141. Substrate is bound at residue 157–161 (IEIIG). 2 residues coordinate Zn(2+): Cys170 and Cys173.

The protein belongs to the thymidine kinase family. Homotetramer. Two molecules of substrate bind to each enzyme tetramer.

The catalysed reaction is thymidine + ATP = dTMP + ADP + H(+). In terms of biological role, phosphorylates thymidine and thymidine analogs, such as azidothymidine (AZT). Part of the salvage pathway for pyrimidine deoxyribonucleotide synthesis. This Cynomys gunnisoni (Gunnison's prairie dog) protein is Thymidine kinase (OPG101).